Reading from the N-terminus, the 238-residue chain is MILYPAIDLKDGNCVRLLRGDMEAATVFGTDPAAQARAFRDAGAEWLHLVDLNGAFAGKPVNAAAVEAILAAIDLPVQLGGGIRDMATIEGWLDRGLARVILGTVAVEQPELVREAAMAFPGKIAVGIDARGGRVATRGWAEETDVNVVDLAHRFEDAGVAAIIYTDIDRDGAMAGPNIAATEALARAVNVPVIASGGVSSMQDLMALRATGVIAGAISGRALYDGAIDLNAALKALA.

The Proton acceptor role is filled by Asp-8. Residue Asp-129 is the Proton donor of the active site.

The protein belongs to the HisA/HisF family.

The protein localises to the cytoplasm. The enzyme catalyses 1-(5-phospho-beta-D-ribosyl)-5-[(5-phospho-beta-D-ribosylamino)methylideneamino]imidazole-4-carboxamide = 5-[(5-phospho-1-deoxy-D-ribulos-1-ylimino)methylamino]-1-(5-phospho-beta-D-ribosyl)imidazole-4-carboxamide. Its pathway is amino-acid biosynthesis; L-histidine biosynthesis; L-histidine from 5-phospho-alpha-D-ribose 1-diphosphate: step 4/9. This is 1-(5-phosphoribosyl)-5-[(5-phosphoribosylamino)methylideneamino] imidazole-4-carboxamide isomerase from Paracoccus denitrificans (strain Pd 1222).